A 445-amino-acid chain; its full sequence is Baccatin III:3-amino-3-phenylpropanoyltransferase (445 aa).

This sequence belongs to the plant acyltransferase family.

The enzyme catalyses (3R)-3-amino-3-phenylpropanoyl-CoA + baccatin III = 3'-N-debenzoyl-2'-deoxytaxol + CoA. The protein operates within alkaloid biosynthesis; taxol biosynthesis. Functionally, acyltransferase involved in taxol biosynthesis. Catalyzes the selective 13-O-acylation of baccatin III with (3R)-3-amino-3-phenylpropanoyl-CoA as the acyl donor to form 3'-N-debenzoyl-2'-deoxytaxol. This is Baccatin III:3-amino-3-phenylpropanoyltransferase from Taxus cuspidata (Japanese yew).